The chain runs to 23 residues: Protein male-specific 40 (23 aa).

During early embryogenesis expression is initially detected at the early cleavage stages in the nucleus of two discrete cells. Subsequently, expression is abundant in the cytoplasm of the newly formed pole cells. Male-specific expression during the third larval instar.

The protein localises to the cytoplasm. Its subcellular location is the nucleus. This chain is Protein male-specific 40, found in Drosophila melanogaster (Fruit fly).